The following is a 136-amino-acid chain: Small ribosomal subunit protein uS9 (136 aa).

Belongs to the universal ribosomal protein uS9 family.

This chain is Small ribosomal subunit protein uS9, found in Borrelia garinii subsp. bavariensis (strain ATCC BAA-2496 / DSM 23469 / PBi) (Borreliella bavariensis).